We begin with the raw amino-acid sequence, 505 residues long: Peroxisome proliferator-activated receptor gamma (505 aa).

The O-linked (GlcNAc) threonine glycan is linked to T84. Position 112 is a phosphoserine; by MAPK (S112). A DNA-binding region (nuclear receptor) is located at residues 136–210 (AIECRVCGDK…VGMSHNAIRF (75 aa)). 2 consecutive NR C4-type zinc fingers follow at residues 139–159 (CRVC…CEGC) and 176–198 (CDLN…FQKC). Residues 205–280 (HNAIRFGRMP…DKSPFVIYDM (76 aa)) are interaction with FAM120B. Residues 238–503 (DLRALAKHLY…HPLLQEIYKD (266 aa)) enclose the NR LBD domain. K252 participates in a covalent cross-link: Glycyl lysine isopeptide (Lys-Gly) (interchain with G-Cter in ubiquitin). The 9aaTAD motif lies at 495–503 (PLLQEIYKD).

The protein belongs to the nuclear hormone receptor family. NR1 subfamily. In terms of assembly, interacts with FOXO1 (acetylated form). Heterodimer with other nuclear receptors, such as RXRA. The heterodimer with the retinoic acid receptor RXRA is called adipocyte-specific transcription factor ARF6. Interacts with NCOA6 coactivator, leading to a strong increase in transcription of target genes. Interacts with coactivator PPARBP, leading to a mild increase in transcription of target genes. Interacts with NOCA7 in a ligand-inducible manner. Interacts with NCOA1 and NCOA2 LXXLL motifs. Interacts with ASXL1, ASXL2, DNTTIP2, FAM120B, MAP2K1/MEK1, NR0B2, PDPK1, PRDM16, PRMT2 and TGFB1I1. Interacts (when activated by agonist) with PPP5C. Interacts with HELZ2 and THRAP3; the interaction stimulates the transcriptional activity of PPARG. Interacts with PER2, the interaction is ligand dependent and blocks PPARG recruitment to target promoters. Interacts with NOCT. Interacts with ACTN4. Interacts (when in the liganded conformation) with GPS2. Interacts with CRY1 and CRY2 in a ligand-dependent manner. In the absence of hormonal ligand, interacts with TACC1. In macrophages, interacts with PAQR3 and STUB1; the interactions promote PPARG poylubiquitination and STUB1-mediated degradation. Phosphorylated by MAPK. The phosphorylation inhibits PPAR gamma activity. In terms of processing, O-GlcNAcylation at Thr-84 reduces transcriptional activity in adipocytes. Post-translationally, phosphorylated at basal conditions and dephosphorylated when treated with the ligand. May be dephosphorylated by PPP5C. The phosphorylated form may be inactive and dephosphorylation at induces adipogenic activity. Ubiquitinated by E3 ubiquitin-protein ligase complex containing FBXO9; leading to proteasomal degradation. Ubiquitinated at Lys-252 by TRIM55 leading to proteasomal degradation. Ubiquitinated by E3 ubiquitin-protein ligase STUB1/CHIP; leading to proteasomal degradation. As to expression, highest expression in adipose tissue.

It is found in the nucleus. The protein resides in the cytoplasm. PDPK1 activates its transcriptional activity independently of its kinase activity. In terms of biological role, nuclear receptor that binds peroxisome proliferators such as hypolipidemic drugs and fatty acids. Once activated by a ligand, the nuclear receptor binds to DNA specific PPAR response elements (PPRE) and modulates the transcription of its target genes, such as acyl-CoA oxidase. It therefore controls the peroxisomal beta-oxidation pathway of fatty acids. Key regulator of adipocyte differentiation and glucose homeostasis. ARF6 acts as a key regulator of the tissue-specific adipocyte P2 (aP2) enhancer. Acts as a critical regulator of gut homeostasis by suppressing NF-kappa-B-mediated pro-inflammatory responses. Plays a role in the regulation of cardiovascular circadian rhythms by regulating the transcription of BMAL1 in the blood vessels. The sequence is that of Peroxisome proliferator-activated receptor gamma (Pparg) from Rattus norvegicus (Rat).